Consider the following 136-residue polypeptide: MHSTIVYACLLALAVFVALHGTPLAALAENGEGTTQPDYDNSTDYYNYEDFKCTCPAPHLNNTNGTVMKPIGCYYTCNVTRCTAPDTYPCYNLTEHQAKNLTTSPTTLCAVGNCDHGICVPNGTKELCFKAPNLEE.

The signal sequence occupies residues 1–28 (MHSTIVYACLLALAVFVALHGTPLAALA). N-linked (GlcNAc...) asparagine glycosylation is found at Asn-41, Asn-61, Asn-64, Asn-78, Asn-92, Asn-100, and Asn-122. Disulfide bonds link Cys-55/Cys-77, Cys-73/Cys-114, Cys-90/Cys-119, and Cys-109/Cys-128.

It is found in the secreted. In terms of biological role, salivary chemokine-binding protein which has chemokine-neutralizing activity and binds to host chemokines CCL2, CCL3, CCL3L1, CCL4, CCL4L1, CCL5, CCL6, CCL7, CCL8, CCL9, CCL11, CCL12, CCL13, CCL14, CCL16, CCL17, CCL18, CCL19, CCL22, CCL23, CCL24 and CCL27. This Amblyomma cajennense (Cayenne tick) protein is Evasin P991.